The following is a 209-amino-acid chain: MSEELAQKTEELSLDSKTVFDSKEEFNAKHPLNSRWTLWYTKPQTNKSENWHDLLKPVITFSSVEEFWGIYNSIPPANQLPLKSDYHLFKEGIRPEWEDEANSKGGKWQFSFNKKSEVNPIINDLWLRGLLAVIGETIEDEENEVNGIVLNIRKQAYRVGIWTKDCDESKLKTVGERLKKVLQLNDEQKVEFMSHDASNTRGAEPQIVL.

MRNA-binding positions include 51 to 52, 97 to 98, and 153 to 158; these read WH, WE, and RKQAYR.

This sequence belongs to the eukaryotic initiation factor 4E family. EIF4F is a multi-subunit complex, the composition of which varies with external and internal environmental conditions. It is composed of at least eIF4A, eIF4E and eIF4G. eIF4E is also known to interact with other partners.

In terms of biological role, recognizes and binds the 7-methylguanosine-containing mRNA cap during an early step in the initiation of protein synthesis and facilitates ribosome binding by inducing the unwinding of the mRNAs secondary structures. The protein is Eukaryotic translation initiation factor 4E (TIF45) of Candida albicans (strain SC5314 / ATCC MYA-2876) (Yeast).